The following is a 441-amino-acid chain: uncharacterized protein (441 aa).

Transmembrane regions (helical) follow at residues 68–88 (MAIA…GPFA), 110–130 (ALIA…PLLV), 131–151 (GALV…AALP), 164–184 (SVAI…MLLP), 194–214 (GASA…LWSL), 229–246 (AIHG…LHGA), 260–280 (SGLA…LLLV), 287–307 (AVGG…GAFL), 337–357 (VAAA…LGVA), 384–404 (VQDA…AALI), and 412–432 (VFVL…TIVG).

The protein belongs to the major facilitator superfamily.

Its subcellular location is the cell membrane. This is an uncharacterized protein from Mycobacterium tuberculosis (strain ATCC 25618 / H37Rv).